Consider the following 474-residue polypeptide: tRNA-2-methylthio-N(6)-dimethylallyladenosine synthase (474 aa).

The region spanning 3-120 (KKLHIKTWGC…LPEMIEQVRR (118 aa)) is the MTTase N-terminal domain. Positions 12, 49, 83, 157, 161, and 164 each coordinate [4Fe-4S] cluster. The region spanning 143–375 (RAEGPTAFVS…QDRITQQAMR (233 aa)) is the Radical SAM core domain. The region spanning 378–441 (RHMMGTVQRI…TNSLRGVFIR (64 aa)) is the TRAM domain.

Belongs to the methylthiotransferase family. MiaB subfamily. In terms of assembly, monomer. [4Fe-4S] cluster serves as cofactor.

Its subcellular location is the cytoplasm. The enzyme catalyses N(6)-dimethylallyladenosine(37) in tRNA + (sulfur carrier)-SH + AH2 + 2 S-adenosyl-L-methionine = 2-methylsulfanyl-N(6)-dimethylallyladenosine(37) in tRNA + (sulfur carrier)-H + 5'-deoxyadenosine + L-methionine + A + S-adenosyl-L-homocysteine + 2 H(+). Functionally, catalyzes the methylthiolation of N6-(dimethylallyl)adenosine (i(6)A), leading to the formation of 2-methylthio-N6-(dimethylallyl)adenosine (ms(2)i(6)A) at position 37 in tRNAs that read codons beginning with uridine. In Shewanella baltica (strain OS185), this protein is tRNA-2-methylthio-N(6)-dimethylallyladenosine synthase.